The chain runs to 57 residues: Large ribosomal subunit protein bL32 (57 aa).

Positions Met-1–Asp-20 are disordered. Residues Arg-7–His-19 show a composition bias toward basic residues.

It belongs to the bacterial ribosomal protein bL32 family.

The sequence is that of Large ribosomal subunit protein bL32 from Ureaplasma urealyticum serovar 10 (strain ATCC 33699 / Western).